A 324-amino-acid chain; its full sequence is Ribosomal RNA small subunit methyltransferase H (324 aa).

S-adenosyl-L-methionine-binding positions include 35 to 37 (GGH), Asp-55, Phe-85, Asp-103, and Gln-110.

The protein belongs to the methyltransferase superfamily. RsmH family.

It is found in the cytoplasm. The catalysed reaction is cytidine(1402) in 16S rRNA + S-adenosyl-L-methionine = N(4)-methylcytidine(1402) in 16S rRNA + S-adenosyl-L-homocysteine + H(+). Specifically methylates the N4 position of cytidine in position 1402 (C1402) of 16S rRNA. The protein is Ribosomal RNA small subunit methyltransferase H of Solidesulfovibrio magneticus (strain ATCC 700980 / DSM 13731 / RS-1) (Desulfovibrio magneticus).